We begin with the raw amino-acid sequence, 74 residues long: Protein kish-B (74 aa).

The N-terminal stretch at 1–22 (MTNVYSLDGILVFGLLFVCTCA) is a signal peptide. The Extracellular segment spans residues 23 to 52 (YFKKVPRLKTWLLSEKKGVWGVFYKAAVIG). A helical transmembrane segment spans residues 53 to 73 (TRLHAAVAIACVVMAFYVLFI). Position 74 (Lys-74) is a topological domain, cytoplasmic.

Belongs to the KISH family.

Its subcellular location is the golgi apparatus membrane. Its function is as follows. Involved in the early part of the secretory pathway. The polypeptide is Protein kish-B (TMEM167B) (Homo sapiens (Human)).